The following is a 92-amino-acid chain: C-C motif chemokine 3 (92 aa).

The N-terminal stretch at 1-23 (MKVSTAALAVLLCTMALWNEVFS) is a signal peptide. 2 cysteine pairs are disulfide-bonded: Cys34–Cys57 and Cys35–Cys73.

Belongs to the intercrine beta (chemokine CC) family. As to quaternary structure, self-associates. Also heterodimer of MIP-1-alpha(4-69) and MIP-1-beta(3-69). Interacts with CCR1.

It is found in the secreted. Monokine with inflammatory and chemokinetic properties. Binds to CCR1, CCR4 and CCR5. One of the major HIV-suppressive factors produced by CD8+ T-cells. Recombinant MIP-1-alpha induces a dose-dependent inhibition of different strains of HIV-1, HIV-2, and simian immunodeficiency virus (SIV). The protein is C-C motif chemokine 3 (Ccl3) of Rattus norvegicus (Rat).